The sequence spans 50 residues: Sperm protamine P1 (50 aa).

The protein belongs to the protamine P1 family. As to quaternary structure, cross-linked by interchain disulfide bonds around the DNA-helix. In terms of tissue distribution, testis.

It localises to the nucleus. Its subcellular location is the chromosome. In terms of biological role, protamines substitute for histones in the chromatin of sperm during the haploid phase of spermatogenesis. They compact sperm DNA into a highly condensed, stable and inactive complex. This chain is Sperm protamine P1 (PRM1), found in Pan paniscus (Pygmy chimpanzee).